The primary structure comprises 283 residues: MANLKALFLRMKSVKSIQKTTKVMQMISAAKLRQVQQRLNNARMHMLELSKIIDTNVVTKNNECTGPHNKKDILLVIMSSDRGLCGNFNNMIVKFAKSYIEELESCGKNVKLLFFGKVAYNMMCSQYSSKILDVFSNIQSITDFLSFKLFLYGSGVDFNQFIGVMVLFNKFYTTILQKPTVEQLMPCNIDISVSLKEYYKYEPAYLNVLSTMSLSYILNLMYIAFLENCASEHSSRVIAMESANNNTKEMLSKLVLQYNRSRQAAITTDLIEVISGFESLGNQ.

It belongs to the ATPase gamma chain family. F-type ATPases have 2 components, CF(1) - the catalytic core - and CF(0) - the membrane proton channel. CF(1) has five subunits: alpha(3), beta(3), gamma(1), delta(1), epsilon(1). CF(0) has three main subunits: a, b and c.

The protein resides in the cell inner membrane. Produces ATP from ADP in the presence of a proton gradient across the membrane. The gamma chain is believed to be important in regulating ATPase activity and the flow of protons through the CF(0) complex. This Ehrlichia ruminantium (strain Welgevonden) protein is ATP synthase gamma chain.